The sequence spans 428 residues: Chaperone SurA (428 aa).

Positions 1 to 13 (MLGALLLSGAVHA) are cleaved as a signal peptide. 2 PpiC domains span residues 164–265 (SEEF…KLLE) and 276–375 (RDEV…EVLG).

Its subcellular location is the periplasm. The catalysed reaction is [protein]-peptidylproline (omega=180) = [protein]-peptidylproline (omega=0). Chaperone involved in the correct folding and assembly of outer membrane proteins. Recognizes specific patterns of aromatic residues and the orientation of their side chains, which are found more frequently in integral outer membrane proteins. May act in both early periplasmic and late outer membrane-associated steps of protein maturation. The chain is Chaperone SurA from Pseudomonas savastanoi pv. phaseolicola (strain 1448A / Race 6) (Pseudomonas syringae pv. phaseolicola (strain 1448A / Race 6)).